A 297-amino-acid chain; its full sequence is Virulence genes transcriptional activator SpvR (297 aa).

The HTH lysR-type domain occupies 1 to 61 (MDFLINKKLK…IRKNGTLIPT (61 aa)). A DNA-binding region (H-T-H motif) is located at residues 21–40 (FSIATSVLYITRTPLSRVIS).

The protein belongs to the LysR transcriptional regulatory family.

Its subcellular location is the cytoplasm. In terms of biological role, positive regulator for the plasmid-encoded virulence factors SpvA, SpvB, and SpvC. The chain is Virulence genes transcriptional activator SpvR (spvR) from Salmonella dublin.